Consider the following 157-residue polypeptide: Transcriptional regulator MraZ (157 aa).

SpoVT-AbrB domains follow at residues 7 to 54 and 83 to 126; these read TYEC…PMKE and VRII…DKDL.

Belongs to the MraZ family. Forms oligomers.

It localises to the cytoplasm. It is found in the nucleoid. This is Transcriptional regulator MraZ from Flavobacterium psychrophilum (strain ATCC 49511 / DSM 21280 / CIP 103535 / JIP02/86).